Consider the following 143-residue polypeptide: Beta/delta-urticatoxin-Uf2a (143 aa).

A signal peptide spans 1–18 (MGAIVLVALMALVASSSA). Residues 19-80 (FSDIEHNIMK…MMLSGRPQPN (62 aa)) constitute a propeptide that is removed on maturation. 6 cysteine pairs are disulfide-bonded: cysteine 83/cysteine 100, cysteine 90/cysteine 105, cysteine 99/cysteine 113, cysteine 115/cysteine 129, cysteine 122/cysteine 134, and cysteine 128/cysteine 142.

This sequence belongs to the urticatoxin-2 family. Expressed in trichomes, that are stiff epidermal hairs located on the surface of petioles and leaves.

Its subcellular location is the secreted. Plant defense neurotoxin that causes pain and systemic symptoms in mammals via modulation of voltage-gated sodium channels (Nav). Potent modulator of human Nav1.5/SCN5A (EC(50)=55 nM), Nav1.6/SCN8A (EC(50)=0.86 nM), and Nav1.7/SCN9A (EC(50)=208 nM), where it shifts the activation threshold to more negative potentials and delays fast inactivation. Also shifts the voltage-dependence of steady-state fast inactivation of Nav1.6/SCN8A, but not that of Nav1.5/SCN5A or Nav1.7/SCN9A. On Nav1.7/SCN9A, principally acts by binding to extracellular loops of domain IV (Nav site 3). Does not affect current response of the tetrodotoxin (TTX)-resistant Nav1.8/SCN10A sodium channel. In vivo, intraplantar injection into mice causes numerous dose-dependent, immediate, and long-lasting spontaneous pain behaviors, while no swelling is observed in the injected paw. At the highest doses tested, systemic symptoms including hypokinesia and hypersalivation are observed. The sequence is that of Beta/delta-urticatoxin-Uf2a from Urtica ferox (Tree nettle).